Reading from the N-terminus, the 199-residue chain is Large ribosomal subunit protein bL25 (199 aa).

This sequence belongs to the bacterial ribosomal protein bL25 family. CTC subfamily. Part of the 50S ribosomal subunit; part of the 5S rRNA/L5/L18/L25 subcomplex. Contacts the 5S rRNA. Binds to the 5S rRNA independently of L5 and L18.

In terms of biological role, this is one of the proteins that binds to the 5S RNA in the ribosome where it forms part of the central protuberance. This chain is Large ribosomal subunit protein bL25, found in Rickettsia akari (strain Hartford).